The sequence spans 504 residues: Maturase K (504 aa).

The protein belongs to the intron maturase 2 family. MatK subfamily.

The protein localises to the plastid. The protein resides in the chloroplast. Usually encoded in the trnK tRNA gene intron. Probably assists in splicing its own and other chloroplast group II introns. This chain is Maturase K, found in Fagus crenata (Japanese beech).